A 381-amino-acid chain; its full sequence is Chaperone protein DnaJ 1 (381 aa).

The J domain maps to 4–68; it reads DYYGLLGVSR…EKRRIVDLGG (65 aa). The CR-type zinc-finger motif lies at 132–214; sequence GVTKQVTVDT…CMGDGRVRAR (83 aa). Residues Cys-145, Cys-148, Cys-162, Cys-165, Cys-188, Cys-191, Cys-202, and Cys-205 each contribute to the Zn(2+) site. 4 CXXCXGXG motif repeats span residues 145 to 152, 162 to 169, 188 to 195, and 202 to 209; these read CDRCHGKG, CDTCGGRG, CPTCRGVG, and CHQCMGDG.

The protein belongs to the DnaJ family. As to quaternary structure, homodimer. It depends on Zn(2+) as a cofactor.

The protein localises to the cytoplasm. Participates actively in the response to hyperosmotic and heat shock by preventing the aggregation of stress-denatured proteins and by disaggregating proteins, also in an autonomous, DnaK-independent fashion. Unfolded proteins bind initially to DnaJ; upon interaction with the DnaJ-bound protein, DnaK hydrolyzes its bound ATP, resulting in the formation of a stable complex. GrpE releases ADP from DnaK; ATP binding to DnaK triggers the release of the substrate protein, thus completing the reaction cycle. Several rounds of ATP-dependent interactions between DnaJ, DnaK and GrpE are required for fully efficient folding. Also involved, together with DnaK and GrpE, in the DNA replication of plasmids through activation of initiation proteins. The sequence is that of Chaperone protein DnaJ 1 from Mycolicibacterium paratuberculosis (strain ATCC BAA-968 / K-10) (Mycobacterium paratuberculosis).